The chain runs to 268 residues: Tryptophan synthase alpha chain (268 aa).

Residues Glu49 and Asp60 each act as proton acceptor in the active site.

This sequence belongs to the TrpA family. In terms of assembly, tetramer of two alpha and two beta chains.

It catalyses the reaction (1S,2R)-1-C-(indol-3-yl)glycerol 3-phosphate + L-serine = D-glyceraldehyde 3-phosphate + L-tryptophan + H2O. It participates in amino-acid biosynthesis; L-tryptophan biosynthesis; L-tryptophan from chorismate: step 5/5. Its function is as follows. The alpha subunit is responsible for the aldol cleavage of indoleglycerol phosphate to indole and glyceraldehyde 3-phosphate. In Photorhabdus laumondii subsp. laumondii (strain DSM 15139 / CIP 105565 / TT01) (Photorhabdus luminescens subsp. laumondii), this protein is Tryptophan synthase alpha chain.